The following is a 359-amino-acid chain: Acyl-CoA Delta-9 desaturase (359 aa).

2 helical membrane passes run 51–71 and 74–94; these read VILFIYLHLAALYGAYLAFTS and IATTIFAIILYQVSGVGITGG. The Fe cation site is built by H96, H101, H133, H136, and H137. The short motif at 96–101 is the Histidine box-1 element; it reads HRLWAH. The Histidine box-2 signature appears at 133-137; it reads HRVHH. The next 2 membrane-spanning stretches (helical) occupy residues 194–214 and 222–244; these read YLILMPIVCFLIPTTIPVYMW and WFVATLFRYTFTLNMTWLVNSAA. H245, H274, H277, and H278 together coordinate Fe cation. A Histidine box-3 motif is present at residues 274–278; it reads HNYHH.

This sequence belongs to the fatty acid desaturase type 1 family. Requires Fe(2+) as cofactor.

It is found in the membrane. It catalyses the reaction octadecanoyl-CoA + 2 Fe(II)-[cytochrome b5] + O2 + 2 H(+) = (9Z)-octadecenoyl-CoA + 2 Fe(III)-[cytochrome b5] + 2 H2O. The catalysed reaction is hexadecanoyl-CoA + 2 Fe(II)-[cytochrome b5] + O2 + 2 H(+) = (9Z)-hexadecenoyl-CoA + 2 Fe(III)-[cytochrome b5] + 2 H2O. Catalyzes the formation of a Delta9 double bond, acting on saturated fatty acyl substrates like palmitoyl-CoA (hexadecanoyl-CoA) and stearoyl-CoA (octadecanoyl-CoA) with higher desaturation activity on octadecanoyl-CoA than hexadecanoyl-CoA. This chain is Acyl-CoA Delta-9 desaturase, found in Acheta domesticus (House cricket).